Reading from the N-terminus, the 320-residue chain is Pyrroline-5-carboxylate reductase 2 (320 aa).

Position 2 is an N-acetylserine (Ser2). NADP(+) contacts are provided by residues 6–11 (IGAGQL) and Ser34. Positions 8, 10, 11, 34, 36, 56, 70, 71, and 97 each coordinate NADPH. NADP(+) contacts are provided by residues Asn56, 69 to 72 (AVKP), and 95 to 97 (CAA). Residue Glu164 participates in L-proline binding. Asn230 is a binding site for NADPH. 2 residues coordinate L-proline: Ala237 and Thr238. Positions 295–305 (PTVSTLTPSSP) are enriched in low complexity. A disordered region spans residues 295–320 (PTVSTLTPSSPGKLLTRSLALGGKKD). Ser304 is modified (phosphoserine).

It belongs to the pyrroline-5-carboxylate reductase family. As to quaternary structure, homodecamer; composed of 5 homodimers. Interacts with LTO1.

Its subcellular location is the cytoplasm. The protein localises to the mitochondrion. It catalyses the reaction L-proline + NADP(+) = (S)-1-pyrroline-5-carboxylate + NADPH + 2 H(+). The catalysed reaction is L-proline + NAD(+) = (S)-1-pyrroline-5-carboxylate + NADH + 2 H(+). The protein operates within amino-acid biosynthesis; L-proline biosynthesis; L-proline from L-glutamate 5-semialdehyde: step 1/1. Functionally, oxidoreductase that catalyzes the last step in proline biosynthesis, which corresponds to the reduction of pyrroline-5-carboxylate to L-proline using NAD(P)H. At physiologic concentrations, has higher specific activity in the presence of NADH. Involved in cellular response to oxidative stress. In some cell types, such as erythrocytes, its primary function may be the generation of NADP(+). The polypeptide is Pyrroline-5-carboxylate reductase 2 (PYCR2) (Macaca fascicularis (Crab-eating macaque)).